The chain runs to 174 residues: Large ribosomal subunit protein uL10 (174 aa).

The protein belongs to the universal ribosomal protein uL10 family. Part of the ribosomal stalk of the 50S ribosomal subunit. The N-terminus interacts with L11 and the large rRNA to form the base of the stalk. The C-terminus forms an elongated spine to which L12 dimers bind in a sequential fashion forming a multimeric L10(L12)X complex.

In terms of biological role, forms part of the ribosomal stalk, playing a central role in the interaction of the ribosome with GTP-bound translation factors. In Coxiella burnetii (strain CbuK_Q154) (Coxiella burnetii (strain Q154)), this protein is Large ribosomal subunit protein uL10.